We begin with the raw amino-acid sequence, 877 residues long: MTKFTTEEVRSKFITYFKANNHTHVPASSLIPHNDPSLMFVNSGMVQFKNVFTGQGKRPYNKAVTSQKSLRAGGKHNDLENVGYTARHHTFFEMLGNFSFGDYFKEQAIYYAWNLLTKEFELPKDKLYATIYHTDDEAAAYWKKIAGFGDDRIIKIKTNDNFWSMGDTGPCGPCSEIFYDHGEQIYGGLPGTKDEDGDRFIEIWNMVFMQYEQIDKDTSIELSQKSIDTGMGLERMTAVLQHVNNNYDIDLFQEIINFTENIVKVKAEGEAKFSYRVIADHLRASSFLIADGVIPSNEGRGYVLRRIMRRSMRHAHMLGSKEPLMYKLLPKLVDLMGNVYPELKRAESFISSILEQEEIRFKATLERGLKLLTEETETLTKGNKLSGEVAFKLYDTYGFPLDLTEDILKNRDIAVDHKGFEEQMLMQKELARKSWLGSGESKTNQLWFDIKEQHGSTEFLGYTLNEAKCKIIALIKNNNLVNDIKEIDTQFLLISNQTPFYGESGGQIGDIGTISAKDSEVEVIDTLKYLGSIIVHKCILKKGQINVGENANFSIDIRYRQNLRIHHSATHILHAVLHEVLGKHVTQKGSLVAPTYLRFDISHSKAVTNEEITLIEDKVNEIIRDNHEVTTTLMATEDAIKQGAMALFGEKYDSEVRVVKMGETSLELCGGTHVRRTGDIGCFKITSESAIAAGVRRIEAVCGEFVITLMRENDSLLKSIESSFKTNKNELITKVNNILERNKEVEKELEKTLLASLDLSIEQIEKQAAQITGIKLLYKKVGNIDNKILRQAAENLTKKVEDLIMVYIAEGIGKLSITVAVSKAITDKYNADIIAKKLSLFLGGSGGGGQASLAQAGGNDIGKLTNIHEKLYSLLTV.

The Zn(2+) site is built by histidine 567, histidine 571, cysteine 669, and histidine 673.

This sequence belongs to the class-II aminoacyl-tRNA synthetase family. It depends on Zn(2+) as a cofactor.

The protein localises to the cytoplasm. The enzyme catalyses tRNA(Ala) + L-alanine + ATP = L-alanyl-tRNA(Ala) + AMP + diphosphate. Its function is as follows. Catalyzes the attachment of alanine to tRNA(Ala) in a two-step reaction: alanine is first activated by ATP to form Ala-AMP and then transferred to the acceptor end of tRNA(Ala). Also edits incorrectly charged Ser-tRNA(Ala) and Gly-tRNA(Ala) via its editing domain. This chain is Alanine--tRNA ligase, found in Rickettsia rickettsii (strain Iowa).